The sequence spans 108 residues: UPF0145 protein SYNPCC7002_A1337 (108 aa).

This sequence belongs to the UPF0145 family.

This is UPF0145 protein SYNPCC7002_A1337 from Picosynechococcus sp. (strain ATCC 27264 / PCC 7002 / PR-6) (Agmenellum quadruplicatum).